The chain runs to 137 residues: Small ribosomal subunit protein uS9 (137 aa).

Belongs to the universal ribosomal protein uS9 family.

This is Small ribosomal subunit protein uS9 (rps9) from Saccharolobus solfataricus (strain ATCC 35092 / DSM 1617 / JCM 11322 / P2) (Sulfolobus solfataricus).